The following is a 141-amino-acid chain: Large ribosomal subunit protein uL16 (141 aa).

Positions 1–20 (MLMPKRTKYRKQQKGRNRGK) are disordered.

Belongs to the universal ribosomal protein uL16 family. As to quaternary structure, part of the 50S ribosomal subunit.

Its function is as follows. Binds 23S rRNA and is also seen to make contacts with the A and possibly P site tRNAs. This Nautilia profundicola (strain ATCC BAA-1463 / DSM 18972 / AmH) protein is Large ribosomal subunit protein uL16.